Reading from the N-terminus, the 576-residue chain is Arginine--tRNA ligase (576 aa).

A 'HIGH' region motif is present at residues 122–132 (PNVAKQMHVGH).

Belongs to the class-I aminoacyl-tRNA synthetase family. In terms of assembly, monomer.

The protein resides in the cytoplasm. It catalyses the reaction tRNA(Arg) + L-arginine + ATP = L-arginyl-tRNA(Arg) + AMP + diphosphate. The chain is Arginine--tRNA ligase from Yersinia pseudotuberculosis serotype O:3 (strain YPIII).